Consider the following 201-residue polypeptide: Fimbrial protein FimX (201 aa).

The N-terminal stretch at Met1–Ala21 is a signal peptide. Cys37 and Cys79 are oxidised to a cystine.

This sequence belongs to the fimbrial protein family.

Its subcellular location is the fimbrium. In terms of biological role, bordetella pertussis is the causative agent of whooping cough. An essential step in the disease process is the attachment of the bacteria to the ciliated epithelium of the respiratory tract, enabling the organism to resist normal host-clearance mechanisms. It is unclear which bacterial cell surface component are responsible for adherence but the fimbriae of B.pertussis are prime candidates for being involved in this process. The sequence is that of Fimbrial protein FimX (fimX) from Bordetella pertussis (strain Tohama I / ATCC BAA-589 / NCTC 13251).